The primary structure comprises 77 residues: Conotoxin ArMKLT2-0322 (77 aa).

The first 22 residues, 1 to 22 (MKLTCVLIIAVLFLIVCQLNTA), serve as a signal peptide directing secretion. Positions 23-47 (DDSRDKQEYRAVRLRDAIRNSRGSR) are excised as a propeptide. Disulfide bonds link Cys49-Cys62, Cys56-Cys67, and Cys61-Cys74.

The protein belongs to the conotoxin O1 superfamily. In terms of tissue distribution, expressed by the venom duct.

Its subcellular location is the secreted. In Conus arenatus (Sand-dusted cone), this protein is Conotoxin ArMKLT2-0322.